A 317-amino-acid chain; its full sequence is Malate dehydrogenase (317 aa).

NAD(+) is bound by residues 10-15 and Asp34; that span reads GGGQIG. Arg83 and Arg89 together coordinate substrate. NAD(+)-binding positions include Asn96 and 119–121; that span reads ISN. 2 residues coordinate substrate: Asn121 and Arg152. Catalysis depends on His176, which acts as the Proton acceptor.

Belongs to the LDH/MDH superfamily. MDH type 3 family.

It catalyses the reaction (S)-malate + NAD(+) = oxaloacetate + NADH + H(+). Its function is as follows. Catalyzes the reversible oxidation of malate to oxaloacetate. This is Malate dehydrogenase from Geobacter sulfurreducens (strain ATCC 51573 / DSM 12127 / PCA).